A 236-amino-acid chain; its full sequence is uncharacterized protein (236 aa).

Positions 1–23 (MRRILSILVFAIMLAGCSSNAST) are cleaved as a signal peptide. Positions 22–62 (STEKQHAGGEKTVKAEPQSTSSQKDSTDDYQPNSQVTDDRT) are disordered. Basic and acidic residues predominate over residues 24–35 (EKQHAGGEKTVK).

This is an uncharacterized protein from Bacillus subtilis (strain 168).